Consider the following 294-residue polypeptide: Nucleotide-binding protein Maqu_2718 (294 aa).

Residue glycine 8 to serine 15 participates in ATP binding. Residue aspartate 61–asparagine 64 coordinates GTP.

The protein belongs to the RapZ-like family.

Functionally, displays ATPase and GTPase activities. This Marinobacter nauticus (strain ATCC 700491 / DSM 11845 / VT8) (Marinobacter aquaeolei) protein is Nucleotide-binding protein Maqu_2718.